Consider the following 190-residue polypeptide: Female-specific histamine-binding protein 2 (190 aa).

The N-terminal stretch at 1–19 (MKLLILSLALVLALSQVKG) is a signal peptide. Histamine is bound by residues S39, D43, Y55, D58, W61, E101, F117, Y119, F127, D139, E154, and W156. 2 disulfides stabilise this stretch: C67/C188 and C138/C167.

This sequence belongs to the calycin superfamily. Histamine-binding salivary protein family. As to quaternary structure, monomer. In terms of tissue distribution, expressed in salivary glands.

The protein resides in the secreted. In terms of biological role, salivary tick protein that acts by scavenging histamine at the wound site, outcompeting histamine receptors for histamine, thereby overcoming host inflammatory responses. Binds histamine with a high-affinity (Kd=1.7 nM). Contains two binding histamine sites (H and L), that appear to bind histamine with differing affinities (high and low). This chain is Female-specific histamine-binding protein 2, found in Rhipicephalus appendiculatus (Brown ear tick).